The sequence spans 319 residues: MVVLVDTVSSTPVRPRHPEKAARPDALSPKKPDWIRVRAPTTRGYGETRSIVKENGLVTVCEEAGCPNIGECWDKKHATFMIMGDTCTRACAFCNVKTGMPGALDPNEPAYVAEATRKLGLEHLVITSVDRDDLADGGAAHFAATIRAVREACPTTTIEILTPDFLRKDGALEVVVAAKPDVFNHNLETVPSRYLSVRPGARYFHSIRLLQRVKELDPTLFTKSGIMVGLGEERHEVLQVMDDLRSAEVDFLTIGQYLQPTRKHHAVMRYVTPDEFGGYAKTAYAKGFLMVSASPMTRSSHHAGDDFAKLRAARAALAR.

The interval 1–28 is disordered; it reads MVVLVDTVSSTPVRPRHPEKAARPDALS. A compositionally biased stretch (basic and acidic residues) spans 16–28; sequence RHPEKAARPDALS. Residues cysteine 61, cysteine 66, cysteine 72, cysteine 87, cysteine 91, cysteine 94, and serine 300 each contribute to the [4Fe-4S] cluster site. The Radical SAM core domain occupies 73–289; it reads WDKKHATFMI…AKTAYAKGFL (217 aa).

This sequence belongs to the radical SAM superfamily. Lipoyl synthase family. Requires [4Fe-4S] cluster as cofactor.

It localises to the cytoplasm. It catalyses the reaction [[Fe-S] cluster scaffold protein carrying a second [4Fe-4S](2+) cluster] + N(6)-octanoyl-L-lysyl-[protein] + 2 oxidized [2Fe-2S]-[ferredoxin] + 2 S-adenosyl-L-methionine + 4 H(+) = [[Fe-S] cluster scaffold protein] + N(6)-[(R)-dihydrolipoyl]-L-lysyl-[protein] + 4 Fe(3+) + 2 hydrogen sulfide + 2 5'-deoxyadenosine + 2 L-methionine + 2 reduced [2Fe-2S]-[ferredoxin]. It participates in protein modification; protein lipoylation via endogenous pathway; protein N(6)-(lipoyl)lysine from octanoyl-[acyl-carrier-protein]: step 2/2. Functionally, catalyzes the radical-mediated insertion of two sulfur atoms into the C-6 and C-8 positions of the octanoyl moiety bound to the lipoyl domains of lipoate-dependent enzymes, thereby converting the octanoylated domains into lipoylated derivatives. This is Lipoyl synthase from Rhodopseudomonas palustris (strain HaA2).